Consider the following 276-residue polypeptide: Rhomboid protease GlpG (276 aa).

6 helical membrane passes run 94–114, 142–162, 169–189, 192–212, 229–249, and 250–270; these read GPVTWVMMIACVVVFIAMQIL, ALMHFSLMHILFNLLWWWYLG, LGSGKLIVITLISALLSGYVQ, FSGPWFGGLSGVVYALMGYVW, LIIFALIWIVAGWFDLFGMSM, and ANGAHIAGLAVGLAMAFVDSL. The active-site Nucleophile is S201. H254 is a catalytic residue.

It belongs to the peptidase S54 family.

It is found in the cell inner membrane. The enzyme catalyses Cleaves type-1 transmembrane domains using a catalytic dyad composed of serine and histidine that are contributed by different transmembrane domains.. In terms of biological role, rhomboid-type serine protease that catalyzes intramembrane proteolysis. In Escherichia coli O7:K1 (strain IAI39 / ExPEC), this protein is Rhomboid protease GlpG.